A 360-amino-acid polypeptide reads, in one-letter code: 3-dehydroquinate synthase (360 aa).

NAD(+)-binding positions include 70-75, 104-108, 128-129, Lys141, and Lys150; these read DGEKYK, GVIGD, and TT. Zn(2+) is bound by residues Glu183, His246, and His263.

It belongs to the sugar phosphate cyclases superfamily. Dehydroquinate synthase family. It depends on Co(2+) as a cofactor. Zn(2+) is required as a cofactor. Requires NAD(+) as cofactor.

It is found in the cytoplasm. It carries out the reaction 7-phospho-2-dehydro-3-deoxy-D-arabino-heptonate = 3-dehydroquinate + phosphate. The protein operates within metabolic intermediate biosynthesis; chorismate biosynthesis; chorismate from D-erythrose 4-phosphate and phosphoenolpyruvate: step 2/7. Functionally, catalyzes the conversion of 3-deoxy-D-arabino-heptulosonate 7-phosphate (DAHP) to dehydroquinate (DHQ). This is 3-dehydroquinate synthase from Acinetobacter baumannii (strain SDF).